Reading from the N-terminus, the 710-residue chain is Chaperonin-containing T-complex member BBS12 (710 aa).

The protein belongs to the TCP-1 chaperonin family. BBS12 subfamily. In terms of assembly, component of the chaperonin-containing T-complex (TRiC), a heterooligomeric complex of about 850 to 900 kDa that forms two stacked rings, 12 to 16 nm in diameter. Interacts with MKKS.

It localises to the cell projection. Its subcellular location is the cilium. Its function is as follows. Component of the chaperonin-containing T-complex (TRiC), a molecular chaperone complex that assists the folding of proteins upon ATP hydrolysis. As part of the TRiC complex may play a role in the assembly of BBSome, a complex involved in ciliogenesis regulating transports vesicles to the cilia. Involved in adipogenic differentiation. The chain is Chaperonin-containing T-complex member BBS12 (BBS12) from Pongo abelii (Sumatran orangutan).